The sequence spans 215 residues: ATP-dependent Clp protease proteolytic subunit 1 (215 aa).

Residue Ser-108 is the Nucleophile of the active site. His-133 is an active-site residue.

Belongs to the peptidase S14 family. As to quaternary structure, fourteen ClpP subunits assemble into 2 heptameric rings which stack back to back to give a disk-like structure with a central cavity, resembling the structure of eukaryotic proteasomes.

The protein resides in the cytoplasm. The catalysed reaction is Hydrolysis of proteins to small peptides in the presence of ATP and magnesium. alpha-casein is the usual test substrate. In the absence of ATP, only oligopeptides shorter than five residues are hydrolyzed (such as succinyl-Leu-Tyr-|-NHMec, and Leu-Tyr-Leu-|-Tyr-Trp, in which cleavage of the -Tyr-|-Leu- and -Tyr-|-Trp bonds also occurs).. Cleaves peptides in various proteins in a process that requires ATP hydrolysis. Has a chymotrypsin-like activity. Plays a major role in the degradation of misfolded proteins. This Paraburkholderia xenovorans (strain LB400) protein is ATP-dependent Clp protease proteolytic subunit 1.